The primary structure comprises 205 residues: High frequency lysogenization protein HflD homolog (205 aa).

This sequence belongs to the HflD family.

The protein localises to the cytoplasm. The protein resides in the cell inner membrane. In Photobacterium profundum (strain SS9), this protein is High frequency lysogenization protein HflD homolog.